A 133-amino-acid chain; its full sequence is Small ribosomal subunit protein uS8 (133 aa).

The protein belongs to the universal ribosomal protein uS8 family. As to quaternary structure, part of the 30S ribosomal subunit. Contacts proteins S5 and S12.

Functionally, one of the primary rRNA binding proteins, it binds directly to 16S rRNA central domain where it helps coordinate assembly of the platform of the 30S subunit. This is Small ribosomal subunit protein uS8 from Parasynechococcus marenigrum (strain WH8102).